The sequence spans 872 residues: Translation initiation factor IF-2 (872 aa).

A compositionally biased stretch (basic and acidic residues) spans 130 to 155 (AEEEAARAAEEEAARLAEEEAARRAA). The segment at 130-282 (AEEEAARAAE…RERERLKHMQ (153 aa)) is disordered. Low complexity predominate over residues 156 to 181 (EPQSEPEAAAPAAEPVAPTAPVAAAP). Over residues 182–194 (APAPATPVAPAQP) the composition is skewed to pro residues. Over residues 195-211 (KPVAAAAPAGDATAVPR) the composition is skewed to low complexity. A compositionally biased stretch (basic and acidic residues) spans 271 to 282 (RARERERLKHMQ). The tr-type G domain maps to 371–539 (TRPPVVTVMG…AILLQAEILD (169 aa)). Residues 380 to 387 (GHVDHGKT) are G1. 380-387 (GHVDHGKT) is a GTP binding site. Residues 405-409 (GITQH) form a G2 region. The G3 stretch occupies residues 427 to 430 (DTPG). GTP contacts are provided by residues 427–431 (DTPGH) and 481–484 (NKID). The interval 481-484 (NKID) is G4. Positions 517-519 (SAK) are G5.

It belongs to the TRAFAC class translation factor GTPase superfamily. Classic translation factor GTPase family. IF-2 subfamily.

It localises to the cytoplasm. One of the essential components for the initiation of protein synthesis. Protects formylmethionyl-tRNA from spontaneous hydrolysis and promotes its binding to the 30S ribosomal subunits. Also involved in the hydrolysis of GTP during the formation of the 70S ribosomal complex. The chain is Translation initiation factor IF-2 from Paramagnetospirillum magneticum (strain ATCC 700264 / AMB-1) (Magnetospirillum magneticum).